We begin with the raw amino-acid sequence, 113 residues long: Ribonuclease P protein component (113 aa).

The protein belongs to the RnpA family. Consists of a catalytic RNA component (M1 or rnpB) and a protein subunit.

It catalyses the reaction Endonucleolytic cleavage of RNA, removing 5'-extranucleotides from tRNA precursor.. In terms of biological role, RNaseP catalyzes the removal of the 5'-leader sequence from pre-tRNA to produce the mature 5'-terminus. It can also cleave other RNA substrates such as 4.5S RNA. The protein component plays an auxiliary but essential role in vivo by binding to the 5'-leader sequence and broadening the substrate specificity of the ribozyme. The sequence is that of Ribonuclease P protein component from Finegoldia magna (strain ATCC 29328 / DSM 20472 / WAL 2508) (Peptostreptococcus magnus).